Reading from the N-terminus, the 364-residue chain is Phosphoserine aminotransferase (364 aa).

R42 is a binding site for L-glutamate. Residues 76 to 77, W102, T156, D175, and Q198 each bind pyridoxal 5'-phosphate; that span reads GR. The residue at position 199 (K199) is an N6-(pyridoxal phosphate)lysine. 240 to 241 serves as a coordination point for pyridoxal 5'-phosphate; that stretch reads NT.

This sequence belongs to the class-V pyridoxal-phosphate-dependent aminotransferase family. SerC subfamily. As to quaternary structure, homodimer. It depends on pyridoxal 5'-phosphate as a cofactor.

The protein resides in the cytoplasm. The enzyme catalyses O-phospho-L-serine + 2-oxoglutarate = 3-phosphooxypyruvate + L-glutamate. It carries out the reaction 4-(phosphooxy)-L-threonine + 2-oxoglutarate = (R)-3-hydroxy-2-oxo-4-phosphooxybutanoate + L-glutamate. It functions in the pathway amino-acid biosynthesis; L-serine biosynthesis; L-serine from 3-phospho-D-glycerate: step 2/3. The protein operates within cofactor biosynthesis; pyridoxine 5'-phosphate biosynthesis; pyridoxine 5'-phosphate from D-erythrose 4-phosphate: step 3/5. Catalyzes the reversible conversion of 3-phosphohydroxypyruvate to phosphoserine and of 3-hydroxy-2-oxo-4-phosphonooxybutanoate to phosphohydroxythreonine. The polypeptide is Phosphoserine aminotransferase (Shewanella woodyi (strain ATCC 51908 / MS32)).